The chain runs to 258 residues: Transcription cofactor vestigial-like protein 1 (258 aa).

2 stretches are compositionally biased toward polar residues: residues 55-65 and 74-87; these read PQELTPSSQSE and SMSPNQWRYSSPWT. The disordered stretch occupies residues 55-93; it reads PQELTPSSQSEGVMLKNDDSMSPNQWRYSSPWTKPQPEV.

The protein belongs to the vestigial family. In terms of assembly, interacts with TEFs.

It localises to the nucleus. In terms of biological role, may act as a specific coactivator for the mammalian TEFs. This chain is Transcription cofactor vestigial-like protein 1 (VGLL1), found in Homo sapiens (Human).